The following is a 283-amino-acid chain: Formamidopyrimidine-DNA glycosylase (283 aa).

Pro-2 functions as the Schiff-base intermediate with DNA in the catalytic mechanism. Glu-3 serves as the catalytic Proton donor. Residue Lys-61 is the Proton donor; for beta-elimination activity of the active site. The DNA site is built by His-94, Arg-113, and Lys-159. The segment at 245-279 adopts an FPG-type zinc-finger fold; the sequence is DAYGREGESCRRCGAVMRREKFMNRSSFYCPKCQP. Arg-269 acts as the Proton donor; for delta-elimination activity in catalysis.

This sequence belongs to the FPG family. Monomer. Requires Zn(2+) as cofactor.

It catalyses the reaction Hydrolysis of DNA containing ring-opened 7-methylguanine residues, releasing 2,6-diamino-4-hydroxy-5-(N-methyl)formamidopyrimidine.. It carries out the reaction 2'-deoxyribonucleotide-(2'-deoxyribose 5'-phosphate)-2'-deoxyribonucleotide-DNA = a 3'-end 2'-deoxyribonucleotide-(2,3-dehydro-2,3-deoxyribose 5'-phosphate)-DNA + a 5'-end 5'-phospho-2'-deoxyribonucleoside-DNA + H(+). Involved in base excision repair of DNA damaged by oxidation or by mutagenic agents. Acts as a DNA glycosylase that recognizes and removes damaged bases. Has a preference for oxidized purines, such as 7,8-dihydro-8-oxoguanine (8-oxoG). Has AP (apurinic/apyrimidinic) lyase activity and introduces nicks in the DNA strand. Cleaves the DNA backbone by beta-delta elimination to generate a single-strand break at the site of the removed base with both 3'- and 5'-phosphates. The sequence is that of Formamidopyrimidine-DNA glycosylase from Mycolicibacterium paratuberculosis (strain ATCC BAA-968 / K-10) (Mycobacterium paratuberculosis).